Here is a 799-residue protein sequence, read N- to C-terminus: Protein translocase subunit SecA (799 aa).

ATP-binding positions include glutamine 85, glycine 103–threonine 107, and aspartate 504.

It belongs to the SecA family. Monomer and homodimer. Part of the essential Sec protein translocation apparatus which comprises SecA, SecYEG and auxiliary proteins SecDF. Other proteins may also be involved.

The protein localises to the cell membrane. The protein resides in the cytoplasm. It catalyses the reaction ATP + H2O + cellular proteinSide 1 = ADP + phosphate + cellular proteinSide 2.. In terms of biological role, part of the Sec protein translocase complex. Interacts with the SecYEG preprotein conducting channel. Has a central role in coupling the hydrolysis of ATP to the transfer of proteins into and across the cell membrane, serving as an ATP-driven molecular motor driving the stepwise translocation of polypeptide chains across the membrane. This is Protein translocase subunit SecA from Lactobacillus gasseri (strain ATCC 33323 / DSM 20243 / BCRC 14619 / CIP 102991 / JCM 1131 / KCTC 3163 / NCIMB 11718 / NCTC 13722 / AM63).